The following is a 465-amino-acid chain: Chromosomal replication initiator protein DnaA (465 aa).

The tract at residues 1–87 (MLWTDCLTRL…RPGSILSSSE (87 aa)) is domain I, interacts with DnaA modulators. The tract at residues 81–123 (SILSSSEQPATTTAALQTAPIPQPAKVKREPEPVANTAVSSKS) is disordered. The segment covering 88 to 100 (QPATTTAALQTAP) has biased composition (low complexity). Positions 88–127 (QPATTTAALQTAPIPQPAKVKREPEPVANTAVSSKSSKKK) are domain II. The segment at 128–345 (LLNPQFTFSL…GALNKVVAIS (218 aa)) is domain III, AAA+ region. Positions 173, 175, 176, and 177 each coordinate ATP. The segment at 346 to 465 (RFKGAPIDLD…YKNLLRLLQS (120 aa)) is domain IV, binds dsDNA.

It belongs to the DnaA family. As to quaternary structure, oligomerizes as a right-handed, spiral filament on DNA at oriC.

The protein localises to the cytoplasm. Functionally, plays an essential role in the initiation and regulation of chromosomal replication. ATP-DnaA binds to the origin of replication (oriC) to initiate formation of the DNA replication initiation complex once per cell cycle. Binds the DnaA box (a 9 base pair repeat at the origin) and separates the double-stranded (ds)DNA. Forms a right-handed helical filament on oriC DNA; dsDNA binds to the exterior of the filament while single-stranded (ss)DNA is stabiized in the filament's interior. The ATP-DnaA-oriC complex binds and stabilizes one strand of the AT-rich DNA unwinding element (DUE), permitting loading of DNA polymerase. After initiation quickly degrades to an ADP-DnaA complex that is not apt for DNA replication. Binds acidic phospholipids. The chain is Chromosomal replication initiator protein DnaA from Acinetobacter baumannii (strain ATCC 17978 / DSM 105126 / CIP 53.77 / LMG 1025 / NCDC KC755 / 5377).